Reading from the N-terminus, the 619-residue chain is Alpha-L-arabinofuranosidase C (619 aa).

An N-terminal signal peptide occupies residues 1 to 37 (MINHNKTPNILAKVFKRTCGLVSTGAALAILSQAASA). A CBM2 domain is found at 38-136 (ACTYTIDSEW…TVTGAACNSA (99 aa)). An intrachain disulfide couples Cys-39 to Cys-133. One can recognise a CBM6 domain in the interval 163–289 (LLQEAQAGFC…LPNIDSLSVV (127 aa)). Positions 300 to 319 (SVSSSSSVQSSSSSSSTPSQ) are disordered.

This sequence belongs to the glycosyl hydrolase 62 family.

The protein localises to the secreted. It catalyses the reaction Hydrolysis of terminal non-reducing alpha-L-arabinofuranoside residues in alpha-L-arabinosides.. Its pathway is glycan metabolism; hemicellulose degradation. Xylanase C contributes to hydrolyze hemicellulose, the major component of plant cell-walls. The sequence is that of Alpha-L-arabinofuranosidase C (xynC) from Cellvibrio japonicus (strain Ueda107) (Pseudomonas fluorescens subsp. cellulosa).